A 145-amino-acid chain; its full sequence is uncharacterized protein (145 aa).

The segment at 95–119 (YVDSTSRTPSAKKDMQGLSVSEKQT) is disordered.

This is an uncharacterized protein from Treponema pallidum (strain Nichols).